We begin with the raw amino-acid sequence, 258 residues long: NAD(P)H-hydrate epimerase (258 aa).

Positions 15–244 constitute a YjeF N-terminal domain; that stretch reads AFQLDQELMS…RIAKEYGIED (230 aa). A (6S)-NADPHX-binding site is contributed by 75 to 79; that stretch reads NNGGD. Residues asparagine 76 and aspartate 145 each contribute to the K(+) site. Residues 149-155 and aspartate 181 contribute to the (6S)-NADPHX site; that span reads GFSFKPP. Serine 184 provides a ligand contact to K(+).

This sequence belongs to the NnrE/AIBP family. K(+) is required as a cofactor.

The protein resides in the cytoplasm. It localises to the mitochondrion. It carries out the reaction (6R)-NADHX = (6S)-NADHX. The enzyme catalyses (6R)-NADPHX = (6S)-NADPHX. In terms of biological role, catalyzes the epimerization of the S- and R-forms of NAD(P)HX, a damaged form of NAD(P)H that is a result of enzymatic or heat-dependent hydration. This is a prerequisite for the S-specific NAD(P)H-hydrate dehydratase to allow the repair of both epimers of NAD(P)HX. The polypeptide is NAD(P)H-hydrate epimerase (Candida albicans (strain WO-1) (Yeast)).